The sequence spans 114 residues: Protein ELF4-LIKE 4 (114 aa).

The interval 87 to 114 is disordered; that stretch reads SVDASSEGESSGTLKSDGKANQKRFRSG. Residues 89-100 show a composition bias toward polar residues; it reads DASSEGESSGTL.

Belongs to the EARLY FLOWERING 4 family. In terms of assembly, homodimer.

The protein resides in the nucleus. In terms of biological role, component of the central CCA1/LHY-TOC1 feedback loop in the circadian clock that promotes clock accuracy and is required for sustained rhythms in the absence of daily light/dark cycles. The chain is Protein ELF4-LIKE 4 (EFL4) from Arabidopsis thaliana (Mouse-ear cress).